Reading from the N-terminus, the 303-residue chain is Olfactory receptor 10A2 (303 aa).

The Extracellular portion of the chain corresponds to 1–12 (MSFSSLPTEIQS). The helical transmembrane segment at 13-33 (LLFLTFLTIYLVTLMGNCLII) threads the bilayer. Topologically, residues 34 to 41 (LVTLADPM) are cytoplasmic. The helical transmembrane segment at 42-62 (LHSPMYFFLRNLSFLEIGFNL) threads the bilayer. The Extracellular segment spans residues 63–86 (VIVPKMLGTLLAQDTTISFLGCAT). A disulfide bond links C84 and C176. Residues 87–107 (QMYFFFFFGVAECFLLATMAY) form a helical membrane-spanning segment. The Cytoplasmic segment spans residues 108–126 (DRYVAICSPLHYPVIMNQR). The chain crosses the membrane as a helical span at residues 127–147 (TRAKLAAASWFPGFPVATVQT). Topologically, residues 148–184 (TWLFSFPFCGTNKVNHFFCDSPPVLRLVCADTALFEI) are extracellular. The chain crosses the membrane as a helical span at residues 185–204 (YAIVGTILVVMIPCLLILCS). At 205 to 224 (YTHIAAAILKIPSAKGKNKA) the chain is on the cytoplasmic side. The helical transmembrane segment at 225–245 (FSTCSSHLLVVSLFYISLSLT) threads the bilayer. Topologically, residues 246–258 (YFRPKSNNSPEGK) are extracellular. Residues 259–279 (KLLSLSYTVMTPMLNPIIYSL) form a helical membrane-spanning segment. Over 280 to 301 (RNNEVKNALSRTVSKALALRNC) the chain is Cytoplasmic.

This sequence belongs to the G-protein coupled receptor 1 family.

It localises to the cell membrane. In terms of biological role, odorant receptor. The chain is Olfactory receptor 10A2 (OR10A2) from Homo sapiens (Human).